A 1029-amino-acid chain; its full sequence is Protein phosphatase 1 regulatory subunit 12A (1029 aa).

A KVKF motif motif is present at residues 35-38; that stretch reads KVKF. ANK repeat units lie at residues 39–68, 72–101, 105–134, 138–164, 198–227, and 231–260; these read DDGA…DINY, DGLT…NINQ, EGWI…HVGA, EGDT…RQGV, SGGT…DVNI, and DGWT…DMET. (3S)-3-hydroxyasparagine; by HIF1AN occurs at positions 67 and 100. At asparagine 226 the chain carries (3S)-3-hydroxyasparagine; by HIF1AN. The disordered stretch occupies residues 290 to 786; that stretch reads LHSEKRDKKS…APSSSSLSTL (497 aa). A compositionally biased stretch (basic and acidic residues) spans 291 to 300; the sequence is HSEKRDKKSP. Position 299 is a phosphoserine (serine 299). Positions 302 to 314 are enriched in polar residues; that stretch reads IESTANMENNQPQ. The segment covering 318–353 has biased composition (basic and acidic residues); the sequence is KNKETLIIEPEKNASRIESLEHEKADEEEEGKKDES. The segment covering 357–369 has biased composition (acidic residues); it reads SEEDEEDDSESEA. The segment covering 385–402 has biased composition (low complexity); that stretch reads TSSTQAAPAAVTAPTLSS. A phosphoserine mark is found at serine 422 and serine 432. A compositionally biased stretch (basic and acidic residues) spans 422–432; sequence SPKEEERKDES. Threonine 443 carries the phosphothreonine modification. Serine 445 is modified (phosphoserine; by NUAK1). Tyrosine 446 is subject to Phosphotyrosine. The segment covering 469–480 has biased composition (low complexity); the sequence is RSASSPRLSSSL. The residue at position 472 (serine 472) is a Phosphoserine; by NUAK1. Residue serine 473 is modified to Phosphoserine; by CDK1. A Phosphoserine modification is found at serine 477. Over residues 481 to 491 the composition is skewed to basic and acidic residues; it reads DNKEKEKDNKG. Phosphoserine is present on residues serine 507 and serine 509. Positions 540–551 are enriched in polar residues; that stretch reads NSSINEGSTYHR. Over residues 564-578 the composition is skewed to low complexity; sequence SCSVPSTTSTPTVTS. The segment covering 585 to 594 has biased composition (polar residues); that stretch reads SLPSSTSTAA. Low complexity predominate over residues 596 to 610; sequence TPPGSSSAGTQSSTS. A phosphoserine mark is found at serine 601 and serine 618. Basic and acidic residues predominate over residues 614-625; sequence WAEDSTEKEKDS. Over residues 626-656 the composition is skewed to low complexity; that stretch reads APTAVTIPVAPTVVNAAAPSTTTLTTTTAGT. The segment covering 671–680 has biased composition (basic and acidic residues); sequence VRDEESESQR. The tract at residues 680–863 is interaction with ROCK2; that stretch reads RKARSRQARQ…VSFWTQDSDE (184 aa). Residues 681-691 are compositionally biased toward basic residues; the sequence is KARSRQARQSR. Serine 690 and serine 693 each carry phosphoserine; by PKA and PKG; in vitro. Threonine 694 bears the Phosphothreonine; by ROCK1, ROCK2, CDC42BP, ZIPK/DAPK3 and RAF1 mark. Residues 716-765 show a composition bias toward basic and acidic residues; the sequence is RTREQENEEKEKEEKEKQDKEKQEEKKESEASREDEYKQKYSRTYDETYT. The span at 771 to 786 shows a compositional bias: low complexity; it reads STSSSSAPSSSSLSTL. The residue at position 801 (serine 801) is a Phosphoserine. The interval 808 to 927 is disordered; it reads AYSRGLAKEN…PYSSRLEKDD (120 aa). Residues 813 to 839 show a composition bias toward basic and acidic residues; that stretch reads LAKENEREGEKKEEEKEGEDKSQPKSI. A compositionally biased stretch (basic residues) spans 840 to 851; sequence RERRRPREKRRS. Serine 851 carries the post-translational modification Phosphoserine; by ROCK2. A phosphoserine mark is found at serine 861 and serine 870. Basic and acidic residues predominate over residues 866–882; sequence QERQSDTEDGSSKRETQ. Residues 883–897 show a composition bias toward low complexity; it reads TDSVSRYDSSSTSSS. 2 positions are modified to phosphoserine: serine 902 and serine 907. A Phosphoserine; by NUAK1 modification is found at serine 909. Positions 913 to 927 are enriched in basic and acidic residues; sequence LEDRKPYSSRLEKDD. Serine 994 is subject to Phosphoserine.

In terms of assembly, PP1 comprises a catalytic subunit, PPP1CA, PPP1CB or PPP1CC, and one or several targeting or regulatory subunits. PPP1R12A mediates binding to myosin. Interacts with ARHA and CIT. Binds PPP1R12B, ROCK1 and IL16. Interacts directly with PRKG1. Non-covalent dimer of 2 dimers; PRKG1-PRKG1 and PPP1R12A-PPP1R12A. Interacts with SMTNL1. Interacts with PPP1CB; the interaction is direct. Interacts (when phosphorylated at Ser-445, Ser-472 and Ser-910) with 14-3-3. Interacts with ROCK1 and ROCK2. Interacts with isoform 1 and isoform 2 of ZIPK/DAPK3. Interacts with RAF1. Interacts with HIF1AN. Interacts with NCKAP1L. In terms of processing, phosphorylated by CIT (Rho-associated kinase). Phosphorylated cooperatively by ROCK1 and CDC42BP on Thr-694. Phosphorylated on upon DNA damage, probably by ATM or ATR. In vitro, phosphorylation of Ser-693 by PKA and PKG appears to prevent phosphorylation of the inhibitory site Thr-694, probably mediated by PRKG1. Phosphorylation at Ser-445, Ser-472 and Ser-909 by NUAK1 promotes interaction with 14-3-3, leading to inhibit interaction with myosin light chain MLC2, preventing dephosphorylation of MLC2. May be phosphorylated at Thr-694 by DMPK; may inhibit the myosin phosphatase activity. Phosphorylated at Ser-473 by CDK1 during mitosis, creating docking sites for the POLO box domains of PLK1. Subsequently, PLK1 binds and phosphorylates PPP1R12A. Expressed in striated and vascular smooth muscle, specificcally in type 2a fibers (at protein level). Expression levels are 20-30% higher in developed males than females (at protein level).

It is found in the cytoplasm. It localises to the cytoskeleton. The protein localises to the stress fiber. Functionally, key regulator of protein phosphatase 1C (PPP1C). Mediates binding to myosin. As part of the PPP1C complex, involved in dephosphorylation of PLK1. Capable of inhibiting HIF1AN-dependent suppression of HIF1A activity. In Mus musculus (Mouse), this protein is Protein phosphatase 1 regulatory subunit 12A.